Consider the following 770-residue polypeptide: Signal transducer and activator of transcription 3 (770 aa).

Alanine 2 is subject to N-acetylalanine. N6-acetyllysine is present on residues lysine 49 and lysine 87. Positions 150–162 (DVRKRVQDLEQKM) match the Essential for nuclear import motif. The SH2 domain maps to 580-670 (WNEGYIMGFI…DATNILVSPL (91 aa)). An allysine; alternate mark is found at lysine 601, lysine 615, and lysine 631. Residues lysine 601, lysine 615, and lysine 631 each carry the N6-acetyllysine; alternate modification. Tyrosine 640 carries the phosphotyrosine; by TYK2 modification. At lysine 685 the chain carries Allysine; alternate. Position 685 is an N6-acetyllysine; alternate (lysine 685). Tyrosine 705 bears the Phosphotyrosine; by FER and PTK6 mark. An N6-acetyllysine modification is found at lysine 707. Threonine 714 carries the phosphothreonine modification. Serine 727 is modified (phosphoserine; by DYRK2, NLK, NEK6, IRAK1, RPS6KA5, ZIPK/DAPK3 and PKC/PRKCE).

The protein belongs to the transcription factor STAT family. As to quaternary structure, forms a homodimer or a heterodimer with a related family member (at least STAT1). Component of a promoter-binding complex composed of STAT3, NFATC3 and NFATC4; complex formation is enhanced by calcineurin. Interacts with IL31RA, NCOA1, PELP1, SIPAR, SOCS7, STATIP1 and TMF1. Interacts with IL23R in presence of IL23. Interacts (via SH2 domain) with NLK. Interacts with ARL2BP; the interaction is enhanced by LIF and JAK1 expression. Interacts with KPNA4 and KPNA5; KPNA4 may be the primary mediator of nuclear import. Interacts with CAV2; the interaction is increased on insulin-induced tyrosine phosphorylation of CAV2 and leads to STAT3 activation. Interacts with ARL2BP; interaction is enhanced with ARL2. Interacts with NEK6. Binds to CDK9 when activated and nuclear. Interacts with BMX. Interacts with ZIPK/DAPK3. Interacts with PIAS3; the interaction occurs on stimulation by IL6, CNTF or OSM and inhibits the DNA binding activity of STAT3. In prostate cancer cells, interacts with PRKCE and promotes DNA binding activity of STAT3. Interacts with STMN3, antagonizing its microtubule-destabilizing activity. Interacts with the 'Lys-129' acetylated form of BIRC5/survivin. Interacts with FER. Interacts (via SH2 domain) with EIF2AK2/PKR (via the kinase catalytic domain). Interacts with FGFR4. Interacts with INPP5F; the interaction is independent of STAT3 Tyr-705 phosphorylation status. Interacts with OCIAD1 and OCIAD2. Interacts (unphosphorylated or phosphorylated at Ser-727) with PHB1. Interacts and may form heterodimers with NHLH1. Found in a complex with SLC39A6, SLC39A10 and with the 'Ser-727' phosphorylated form of STAT3 throughout mitosis. Interacts (when acetylated) with EP300 (via bromo domain); interaction takes place following STAT3 acetylation by EP300 and promotes enhanceosome assembly. Interacts (when acetylated) with BRD2 (via bromo domain); interaction promotes STAT3 recruitment to chromatin and T-helper Th17 cell differentiation. Interacts with FAM220A/SIPAR; the interaction occurs in both the nucleus and the cytoplasm, is enhanced by IL6 and promotes STAT3 dephosphorylation. Interacts in both unphosphorylated and phosphorylated forms with FAM220A but interacts preferentially in the phosphorylated form in the nucleus. Interacts with PTPN2; the interaction is promoted by FAM220A and leads to STAT3 dephosphorylation which negatively regulates STAT3 transcriptional activator activity. In terms of processing, activated through tyrosine phosphorylation by BMX. Tyrosine phosphorylated in response to IL6, IL11, CNTF, LIF, KITLG/SCF, CSF1, EGF, PDGF, IFN-alpha and OSM. Activated KIT promotes phosphorylation on tyrosine residues and subsequent translocation to the nucleus. Tyrosine phosphorylated in response to constitutively activated FGFR1, FGFR2, FGFR3 and FGFR4. Phosphorylated on serine upon DNA damage, probably by ATM or ATR. Serine phosphorylation is important for the formation of stable DNA-binding STAT3 homodimers and maximal transcriptional activity. ARL2BP may participate in keeping the phosphorylated state of STAT3 within the nucleus. Tyrosine phosphorylated upon stimulation with EGF. Upon LPS challenge, phosphorylated within the nucleus by IRAK1. Phosphorylated on Ser-727 by RPS6KA5. Dephosphorylation on tyrosine residues by PTPN2 negatively regulates IL6/interleukin-6 signaling. Phosphorylation at Tyr-705 by FER, isoform M2 of PKM (PKM2) or PTK6 leads to an increase of its transcriptional activity. Phosphorylation at Tyr-705 is increased in the presence of calcineurin. Phosphorylation at Tyr-640 by TYK2 negatively regulates transcriptional activity. Acetylated on lysine residues by EP300/p300, promoting its activation. Acetylation at Lys-49 and Lys-87 by EP300/p300 promotes its activation. Acetylation at Lys-87 by EP300/p300 promotes its association with BRD2 and recruitment to chromatin. Deacetylated at Lys-49 and Lys-87 by HDAC1. Acetylation at Lys-685 by EP300/p300 promotes its homodimerization and activation. Deacetylated at Lys-685 by HDAC3. Acetylated on lysine residues by CREBBP. Deacetylation by LOXL3 leads to disrupt STAT3 dimerization and inhibit STAT3 transcription activity. Oxidation of lysine residues to allysine on STAT3 preferentially takes place on lysine residues that are acetylated. Post-translationally, some lysine residues are oxidized to allysine by LOXL3, leading to disrupt STAT3 dimerization and inhibit STAT3 transcription activity. Oxidation of lysine residues to allysine on STAT3 preferentially takes place on lysine residues that are acetylated. As to expression, detected in lung, heart, oviduct, ovary, uterus and kidney (at protein level). Expressed in cardiomyocytes (at protein level). Detected in ovary, oviduct, and at lower levels in uterus and lung.

The protein localises to the cytoplasm. It localises to the nucleus. Signal transducer and transcription activator that mediates cellular responses to interleukins, KITLG/SCF, LEP and other growth factors. Once activated, recruits coactivators, such as NCOA1 or MED1, to the promoter region of the target gene. May mediate cellular responses to activated FGFR1, FGFR2, FGFR3 and FGFR4. Upon activation of IL6ST/gp130 signaling by interleukin-6 (IL6), binds to the IL6-responsive elements identified in the promoters of various acute-phase protein genes. Activated by IL31 through IL31RA. Acts as a regulator of inflammatory response by regulating differentiation of naive CD4(+) T-cells into T-helper Th17 or regulatory T-cells (Treg): acetylation promotes its transcription activity and cell differentiation while deacetylation and oxidation of lysine residues by LOXL3 inhibits differentiation. Involved in cell cycle regulation by inducing the expression of key genes for the progression from G1 to S phase, such as CCND1. Mediates the effects of LEP on melanocortin production, body energy homeostasis and lactation. May play an apoptotic role by transctivating BIRC5 expression under LEP activation. Cytoplasmic STAT3 represses macroautophagy by inhibiting EIF2AK2/PKR activity. Plays a crucial role in basal beta cell functions, such as regulation of insulin secretion. Following JAK/STAT signaling activation and as part of a complex with NFATC3 and NFATC4, binds to the alpha-beta E4 promoter region of CRYAB and activates transcription in cardiomyocytes. Plays an important role in host defense in methicillin-resistant S.aureus lung infection by regulating the expression of the antimicrobial lectin REG3G. This is Signal transducer and activator of transcription 3 (Stat3) from Rattus norvegicus (Rat).